Reading from the N-terminus, the 224-residue chain is Phosphoribosylformylglycinamidine synthase subunit PurQ (224 aa).

Residues 4–224 (RIGIITFPGT…YSVLDGVLAG (221 aa)) form the Glutamine amidotransferase type-1 domain. Catalysis depends on cysteine 87, which acts as the Nucleophile. Active-site residues include histidine 195 and glutamate 197.

Part of the FGAM synthase complex composed of 1 PurL, 1 PurQ and 2 PurS subunits.

Its subcellular location is the cytoplasm. It carries out the reaction N(2)-formyl-N(1)-(5-phospho-beta-D-ribosyl)glycinamide + L-glutamine + ATP + H2O = 2-formamido-N(1)-(5-O-phospho-beta-D-ribosyl)acetamidine + L-glutamate + ADP + phosphate + H(+). The enzyme catalyses L-glutamine + H2O = L-glutamate + NH4(+). It participates in purine metabolism; IMP biosynthesis via de novo pathway; 5-amino-1-(5-phospho-D-ribosyl)imidazole from N(2)-formyl-N(1)-(5-phospho-D-ribosyl)glycinamide: step 1/2. Its function is as follows. Part of the phosphoribosylformylglycinamidine synthase complex involved in the purines biosynthetic pathway. Catalyzes the ATP-dependent conversion of formylglycinamide ribonucleotide (FGAR) and glutamine to yield formylglycinamidine ribonucleotide (FGAM) and glutamate. The FGAM synthase complex is composed of three subunits. PurQ produces an ammonia molecule by converting glutamine to glutamate. PurL transfers the ammonia molecule to FGAR to form FGAM in an ATP-dependent manner. PurS interacts with PurQ and PurL and is thought to assist in the transfer of the ammonia molecule from PurQ to PurL. The sequence is that of Phosphoribosylformylglycinamidine synthase subunit PurQ from Mycolicibacterium paratuberculosis (strain ATCC BAA-968 / K-10) (Mycobacterium paratuberculosis).